Reading from the N-terminus, the 280-residue chain is Bifunctional protein FolD (280 aa).

NADP(+) is bound by residues 165–167 (GRS), serine 190, and isoleucine 231.

The protein belongs to the tetrahydrofolate dehydrogenase/cyclohydrolase family. In terms of assembly, homodimer.

It catalyses the reaction (6R)-5,10-methylene-5,6,7,8-tetrahydrofolate + NADP(+) = (6R)-5,10-methenyltetrahydrofolate + NADPH. The catalysed reaction is (6R)-5,10-methenyltetrahydrofolate + H2O = (6R)-10-formyltetrahydrofolate + H(+). It participates in one-carbon metabolism; tetrahydrofolate interconversion. Functionally, catalyzes the oxidation of 5,10-methylenetetrahydrofolate to 5,10-methenyltetrahydrofolate and then the hydrolysis of 5,10-methenyltetrahydrofolate to 10-formyltetrahydrofolate. The polypeptide is Bifunctional protein FolD (Moorella thermoacetica (strain ATCC 39073 / JCM 9320)).